The sequence spans 153 residues: NADPH-dependent 7-cyano-7-deazaguanine reductase (153 aa).

The interval 1–30 (MDSIETHAKQLGQQTPLPASPEAAQLDRVP) is disordered. The Thioimide intermediate role is filled by Cys-51. Catalysis depends on Asp-58, which acts as the Proton donor. Substrate contacts are provided by residues 73–75 (VES) and 92–93 (HE).

This sequence belongs to the GTP cyclohydrolase I family. QueF type 1 subfamily.

Its subcellular location is the cytoplasm. It carries out the reaction 7-aminomethyl-7-carbaguanine + 2 NADP(+) = 7-cyano-7-deazaguanine + 2 NADPH + 3 H(+). The protein operates within tRNA modification; tRNA-queuosine biosynthesis. Functionally, catalyzes the NADPH-dependent reduction of 7-cyano-7-deazaguanine (preQ0) to 7-aminomethyl-7-deazaguanine (preQ1). This Methylorubrum extorquens (strain CM4 / NCIMB 13688) (Methylobacterium extorquens) protein is NADPH-dependent 7-cyano-7-deazaguanine reductase.